Here is a 147-residue protein sequence, read N- to C-terminus: 3-hydroxyacyl-[acyl-carrier-protein] dehydratase FabZ (147 aa).

H50 is an active-site residue.

It belongs to the thioester dehydratase family. FabZ subfamily.

The protein localises to the cytoplasm. It carries out the reaction a (3R)-hydroxyacyl-[ACP] = a (2E)-enoyl-[ACP] + H2O. Its function is as follows. Involved in unsaturated fatty acids biosynthesis. Catalyzes the dehydration of short chain beta-hydroxyacyl-ACPs and long chain saturated and unsaturated beta-hydroxyacyl-ACPs. This chain is 3-hydroxyacyl-[acyl-carrier-protein] dehydratase FabZ, found in Lactiplantibacillus plantarum (strain ATCC BAA-793 / NCIMB 8826 / WCFS1) (Lactobacillus plantarum).